A 146-amino-acid chain; its full sequence is uncharacterized protein (146 aa).

Residues 6-26 (IPIFVISLSNISHIILAIFFF) form a helical membrane-spanning segment.

It localises to the membrane. This is an uncharacterized protein from Caenorhabditis elegans.